Reading from the N-terminus, the 568-residue chain is Potassium-transporting ATPase potassium-binding subunit (568 aa).

12 helical membrane-spanning segments follow: residues 7–27 (LLIT…GNII), 67–87 (YALA…TLLV), 137–157 (GLTV…FALI), 180–200 (LYLL…QGVI), 258–278 (FIQI…FGQV), 288–308 (LLWA…YAEL), 332–352 (FGIL…CGAV), 361–381 (ALGG…FGGV), 384–404 (GLYG…LMIG), 421–441 (MVAL…ALTI), 488–508 (LLLA…VLAI), and 535–555 (LLIL…LILG).

Belongs to the KdpA family. In terms of assembly, the system is composed of three essential subunits: KdpA, KdpB and KdpC.

It localises to the cell inner membrane. Part of the high-affinity ATP-driven potassium transport (or Kdp) system, which catalyzes the hydrolysis of ATP coupled with the electrogenic transport of potassium into the cytoplasm. This subunit binds the periplasmic potassium ions and delivers the ions to the membrane domain of KdpB through an intramembrane tunnel. This is Potassium-transporting ATPase potassium-binding subunit from Photorhabdus laumondii subsp. laumondii (strain DSM 15139 / CIP 105565 / TT01) (Photorhabdus luminescens subsp. laumondii).